Consider the following 279-residue polypeptide: Energy-coupling factor transporter ATP-binding protein EcfA1 (279 aa).

An ABC transporter domain is found at 5–240 (IELKKVTFNY…GDELLQLGLD (236 aa)). 40-47 (GHNGSGKS) is a binding site for ATP.

Belongs to the ABC transporter superfamily. Energy-coupling factor EcfA family. As to quaternary structure, forms a stable energy-coupling factor (ECF) transporter complex composed of 2 membrane-embedded substrate-binding proteins (S component), 2 ATP-binding proteins (A component) and 2 transmembrane proteins (T component).

The protein resides in the cell membrane. Functionally, ATP-binding (A) component of a common energy-coupling factor (ECF) ABC-transporter complex. Unlike classic ABC transporters this ECF transporter provides the energy necessary to transport a number of different substrates. The polypeptide is Energy-coupling factor transporter ATP-binding protein EcfA1 (Streptococcus pyogenes serotype M5 (strain Manfredo)).